We begin with the raw amino-acid sequence, 329 residues long: Putative methylthioribose-1-phosphate isomerase (329 aa).

Substrate contacts are provided by residues 50-52, R84, and Q182; that span reads RGA. Catalysis depends on D223, which acts as the Proton donor. Residue 233–234 coordinates substrate; sequence NK.

Belongs to the eIF-2B alpha/beta/delta subunits family. MtnA subfamily.

It carries out the reaction 5-(methylsulfanyl)-alpha-D-ribose 1-phosphate = 5-(methylsulfanyl)-D-ribulose 1-phosphate. Functionally, catalyzes the interconversion of methylthioribose-1-phosphate (MTR-1-P) into methylthioribulose-1-phosphate (MTRu-1-P). The sequence is that of Putative methylthioribose-1-phosphate isomerase from Methanocaldococcus jannaschii (strain ATCC 43067 / DSM 2661 / JAL-1 / JCM 10045 / NBRC 100440) (Methanococcus jannaschii).